The following is a 278-amino-acid chain: Checkpoint protein HUS1B (278 aa).

Belongs to the HUS1 family. In terms of assembly, interacts with RAD1 and RAD9B. In terms of tissue distribution, expressed strongly in testis, less in spleen, thymus, prostate, colon and leukocytes.

The chain is Checkpoint protein HUS1B (HUS1B) from Homo sapiens (Human).